The primary structure comprises 400 residues: Zinc finger CCHC domain-containing protein 3 (400 aa).

The segment at 1–157 (MATGGGAEEE…LQDEPPAAGP (157 aa)) is disordered. Basic and acidic residues-rich tracts occupy residues 26 to 38 (ARVE…REKM) and 47 to 63 (LAEK…RDET). Over residues 66–75 (GASGGLGSPG) the composition is skewed to gly residues. The segment covering 91–109 (GDPKGRRRDPTGEASDAYR) has biased composition (basic and acidic residues). Position 198 is a phosphotyrosine (tyrosine 198). 2 CCHC-type zinc fingers span residues 349–365 (RCFR…YCRK) and 369–384 (CNLC…QCPK).

As to quaternary structure, interacts with CGAS. Interacts with RIGI. Interacts with IFIH1/MDA5.

The protein resides in the cytoplasm. In terms of biological role, nucleic acid-binding protein involved in innate immune response to DNA and RNA viruses. Binds DNA and RNA in the cytoplasm and acts by promoting recognition of viral nucleic acids by virus sensors, such as RIGI, IFIH1/MDA5 and CGAS. Acts as a co-sensor for recognition of double-stranded DNA (dsDNA) by cGAS in the cytoplasm, thereby playing a role in innate immune response to cytosolic dsDNA and DNA virus. Binds dsDNA and probably acts by promoting sensing of dsDNA by CGAS, leading to enhance CGAS oligomerization and activation. Promotes sensing of viral RNA by RIG-I-like receptors proteins RIGI and IFIH1/MDA5 via two mechanisms: binds double-stranded RNA (dsRNA), enhancing the binding of RIGI and IFIH1/MDA5 to dsRNA and promotes 'Lys-63'-linked ubiquitination and subsequent activation of RIGI and IFIH1/MDA5. The chain is Zinc finger CCHC domain-containing protein 3 from Mus musculus (Mouse).